Consider the following 607-residue polypeptide: UvrABC system protein C (607 aa).

The GIY-YIG domain maps to His14 to Ile93. In terms of domain architecture, UVR spans Arg203–Thr238.

This sequence belongs to the UvrC family. As to quaternary structure, interacts with UvrB in an incision complex.

The protein resides in the cytoplasm. In terms of biological role, the UvrABC repair system catalyzes the recognition and processing of DNA lesions. UvrC both incises the 5' and 3' sides of the lesion. The N-terminal half is responsible for the 3' incision and the C-terminal half is responsible for the 5' incision. The chain is UvrABC system protein C from Desulfotalea psychrophila (strain LSv54 / DSM 12343).